A 132-amino-acid chain; its full sequence is Histone H2A.2 (132 aa).

At S2 the chain carries N-acetylserine. N6-acetyllysine is present on residues K5 and K8. N6-succinyllysine occurs at positions 14 and 22. Q106 carries the N5-methylglutamine modification. The residue at position 120 (K120) is an N6-malonyllysine. K127 participates in a covalent cross-link: Glycyl lysine isopeptide (Lys-Gly) (interchain with G-Cter in SUMO). Phosphoserine is present on S129. The [ST]-Q motif signature appears at 129–130 (SQ).

This sequence belongs to the histone H2A family. In terms of assembly, the nucleosome is a histone octamer containing two molecules each of H2A, H2B, H3 and H4 assembled in one H3-H4 heterotetramer and two H2A-H2B heterodimers. The octamer wraps approximately 147 bp of DNA. Interacts with NAP1. Post-translationally, phosphorylated to form H2AS128ph (gamma-H2A) in response to DNA double-strand breaks (DSBs) generated by exogenous genotoxic agents and by stalled replication forks. Phosphorylation is dependent on the DNA damage checkpoint kinases MEC1/ATR and TEL1/ATM, spreads on either side of a detected DSB site and may mark the surrounding chromatin for recruitment of proteins required for DNA damage signaling and repair. Gamma-H2A interacts with ARP4, a shared component of the NuA4 histone acetyltransferase complex and the INO80 and SWR1 chromatin remodeling complexes, and serves to recruit first NuA4, mediating histone H4 acetylation, and subsequently the INO80/SWR1 complexes, facilitating DNA resection, to DSB sites. Gamma-H2A is required for sequestering cohesin around the break site, which is important for efficient post-replicative double-strand break repair by homologous recombination, holding the damaged chromatid close to its undamaged sister template. Gamma-H2A is removed from the DNA prior to the strand invasion-primer extension step of the repair process and subsequently dephosphorylated by PPH3, a component of the histone H2A phosphatase complex (HTP-C). Dephosphorylation is necessary for efficient recovery from the DNA damage checkpoint. N-acetylated by NAT4. In terms of processing, acetylated by ESA1, a component of the NuA4 histone acetyltransferase (HAT) complex, to form H2AK4ac and H2AK7ac. Post-translationally, glutamine methylation at Gln-106 (H2AQ105me) by NOP1 is specifically dedicated to polymerase I. It is present at 35S ribosomal DNA locus and impairs binding of the FACT complex. Sumoylated to from H2AK126su. May lead to transcriptional repression.

The protein resides in the nucleus. It is found in the chromosome. In terms of biological role, core component of nucleosome which plays a central role in DNA double strand break (DSB) repair. Nucleosomes wrap and compact DNA into chromatin, limiting DNA accessibility to the cellular machineries which require DNA as a template. Histones thereby play a central role in transcription regulation, DNA repair, DNA replication and chromosomal stability. DNA accessibility is regulated via a complex set of post-translational modifications of histones, also called histone code, and nucleosome remodeling. The sequence is that of Histone H2A.2 (HTA2) from Saccharomyces cerevisiae (strain ATCC 204508 / S288c) (Baker's yeast).